The sequence spans 741 residues: MKINTLPTLSALTLAMSLALGAGMATAQEQATGNQFWWPEKLNLSPLRQNAIESNPYGSDYRYAEAFNTLDLDAVKKDIKALMTESQDWWPADYGHYGPFFIRMAWHSAGVYRIFDGRGGAAGGQQRFEPLNSWPADNVSLDKARRLLWPIKQKYGSKLSWGDLMVLTGNVALESMGFKTFGFGGGRVDDWEAEMVNWGSEKAWLDNKRHNGKGELAKPMGATQMGLIYVNPEGPNGVPDPLASAKEIRDTFGRMAMNDEETVALIAGGHTFGKAHGAHDPAKCVGADPAAAGIEEQGLGWKNKCGKGHSEDTVTSGLEGAWSSNPTKWTMEYLTWLYTFDWVQTKSPAGHIQWTPADGKAANLVPDAHLPDKRHAPIMFTSDIALKADPIYREITTRFLKNPQEFELAFAKAWFKLTHRDLGPKARYLGADVPAEALIWQDPIPALDHPLIDNADIKALGNKILASGLTVPELVRTAWASASSFRGTDMRGGANGARIRLEPMMNWQANNPKELAKVLAKLEKVQKDFNGSLKGSKKVSLADVIVLGGSVAVEKAAKEAGVVISVPFTPGRMDATQVQTDVNSFAVLEPAADGFRNYYSKDSSLSPAEMLIERANMLNLTVPEMTVLVGGLRALDANSAGVKHGVFTDKPGVLSNDFFVNLLDMSTKWRKSDKQEGIYEGQDRNSGKLKWTATPVDLIFGSHSELRAVSEVYGAQDGQDRFIQDFVKAWNKVMNADRFDI.

Positions methionine 1–alanine 27 are cleaved as a signal peptide. The segment at residues tryptophan 106–tyrosine 229 is a cross-link (tryptophyl-tyrosyl-methioninium (Trp-Tyr) (with M-255)). Residue histidine 107 is the Proton acceptor of the active site. Residues tyrosine 229–methionine 255 constitute a cross-link (tryptophyl-tyrosyl-methioninium (Tyr-Met) (with W-106)). Position 270 (histidine 270) interacts with heme b.

Belongs to the peroxidase family. Peroxidase/catalase subfamily. In terms of assembly, homodimer or homotetramer. It depends on heme b as a cofactor. In terms of processing, formation of the three residue Trp-Tyr-Met cross-link is important for the catalase, but not the peroxidase activity of the enzyme.

It catalyses the reaction H2O2 + AH2 = A + 2 H2O. The catalysed reaction is 2 H2O2 = O2 + 2 H2O. Its function is as follows. Bifunctional enzyme with both catalase and broad-spectrum peroxidase activity. The polypeptide is Catalase-peroxidase 2 (Shewanella oneidensis (strain ATCC 700550 / JCM 31522 / CIP 106686 / LMG 19005 / NCIMB 14063 / MR-1)).